The following is a 571-amino-acid chain: Proline--tRNA ligase (571 aa).

Belongs to the class-II aminoacyl-tRNA synthetase family. ProS type 1 subfamily. Homodimer.

The protein resides in the cytoplasm. It carries out the reaction tRNA(Pro) + L-proline + ATP = L-prolyl-tRNA(Pro) + AMP + diphosphate. In terms of biological role, catalyzes the attachment of proline to tRNA(Pro) in a two-step reaction: proline is first activated by ATP to form Pro-AMP and then transferred to the acceptor end of tRNA(Pro). As ProRS can inadvertently accommodate and process non-cognate amino acids such as alanine and cysteine, to avoid such errors it has two additional distinct editing activities against alanine. One activity is designated as 'pretransfer' editing and involves the tRNA(Pro)-independent hydrolysis of activated Ala-AMP. The other activity is designated 'posttransfer' editing and involves deacylation of mischarged Ala-tRNA(Pro). The misacylated Cys-tRNA(Pro) is not edited by ProRS. This is Proline--tRNA ligase from Leuconostoc citreum (strain KM20).